We begin with the raw amino-acid sequence, 545 residues long: Myotubularin-related protein 9 (545 aa).

The residue at position 1 (methionine 1) is an N-acetylmethionine. The region spanning 4–99 is the GRAM domain; the sequence is AELIKTPRVD…LNIASSIEAL (96 aa). The Myotubularin phosphatase domain occupies 123–498; that stretch reads GWHSFLPEQE…QSLQLWEGIF (376 aa). Residues 508-542 are a coiled coil; it reads LDEAYEEMVNIIEYNKELQAKVNVLRRQLAELETE.

This sequence belongs to the protein-tyrosine phosphatase family. Non-receptor class myotubularin subfamily. In terms of assembly, homodimer. Heterodimer (via C-terminus) with lipid phosphatase MTMR6 (via C-terminus). Heterodimer (via coiled coil domain) with lipid phosphatase MTMR7 (via C-terminus).

The protein localises to the cytoplasm. It is found in the cell projection. Its subcellular location is the ruffle membrane. The protein resides in the perinuclear region. It localises to the endoplasmic reticulum. In terms of biological role, acts as an adapter for myotubularin-related phosphatases. Increases lipid phosphatase MTMR6 catalytic activity, specifically towards phosphatidylinositol 3,5-bisphosphate, and MTMR6 binding affinity for phosphorylated phosphatidylinositols. Positively regulates lipid phosphatase MTMR7 catalytic activity. The formation of the MTMR6-MTMR9 complex, stabilizes both MTMR6 and MTMR9 protein levels. Plays a role in the late stages of macropinocytosis possibly by regulating MTMR6-mediated dephosphorylation of phosphatidylinositol 3-phosphate in membrane ruffles. Negatively regulates DNA damage-induced apoptosis, in part via its association with MTMR6. Does not bind mono-, di- and tri-phosphorylated phosphatidylinositols, phosphatidic acid and phosphatidylserine. The polypeptide is Myotubularin-related protein 9 (Mtmr9) (Mus musculus (Mouse)).